A 468-amino-acid polypeptide reads, in one-letter code: Sorting and assembly machinery component 50 homolog B (468 aa).

The tract at residues Met-1 to Ala-25 is disordered. In terms of domain architecture, POTRA spans Val-44–Leu-124.

This sequence belongs to the SAM50/omp85 family. In terms of assembly, associates with the mitochondrial contact site and cristae organizing system (MICOS) complex (also known as MINOS or MitOS complex).

It is found in the mitochondrion outer membrane. Functionally, may play a role in the maintenance of the structure of mitochondrial cristae. The chain is Sorting and assembly machinery component 50 homolog B (samm50-b) from Xenopus laevis (African clawed frog).